The following is a 1266-amino-acid chain: Phosphatidylinositol 3,4,5-trisphosphate 5-phosphatase 2A (1266 aa).

One can recognise an SH2 domain in the interval 15-111; the sequence is WMHRDLSRAA…GLVTTLLYPV (97 aa). The segment covering 114 to 123 has biased composition (basic and acidic residues); that stretch reads EETTEDRDYS. Disordered stretches follow at residues 114 to 159 and 879 to 951; these read EETT…NVTA and DMGG…DATT. Polar residues predominate over residues 136–159; it reads TASTSSMTGSALVSTDTPPENVTA. Composition is skewed to basic and acidic residues over residues 915 to 924 and 931 to 944; these read RVSEEGEKSS and TKEE…KQDP. Residues 958-961 carry the NPXY motif motif; the sequence is NPAY. Tyr961 carries the phosphotyrosine modification. Disordered regions lie at residues 986-1132 and 1147-1174; these read PLAN…SALD and EVEY…SFPS. Positions 994–1012 are enriched in low complexity; it reads PPAGSVGKSKPPSGSSAQG. Residues 1045 to 1056 show a composition bias toward pro residues; that stretch reads RPPPDFPPPPLP. Positions 1203–1266 constitute an SAM domain; that stretch reads SVDCSVGEWL…LLASLKQQQK (64 aa).

This sequence belongs to the inositol 1,4,5-trisphosphate 5-phosphatase family. In terms of processing, tyrosine phosphorylated by the members of the SRC family after exposure to a diverse array of extracellular stimuli.

The protein localises to the cytoplasm. It is found in the cytosol. It localises to the cytoskeleton. Its subcellular location is the membrane. The protein resides in the cell projection. The protein localises to the filopodium. It is found in the lamellipodium. It localises to the nucleus. Its subcellular location is the nucleus speckle. The catalysed reaction is a 1,2-diacyl-sn-glycero-3-phospho-(1D-myo-inositol-3,4,5-trisphosphate) + H2O = a 1,2-diacyl-sn-glycero-3-phospho-(1D-myo-inositol-3,4-bisphosphate) + phosphate. Phosphatidylinositol (PtdIns) phosphatase that specifically hydrolyzes the 5-phosphate of phosphatidylinositol-3,4,5-trisphosphate (PtdIns(3,4,5)P3) to produce PtdIns(3,4)P2, thereby negatively regulating the PI3K (phosphoinositide 3-kinase) pathways. Plays a central role in regulation of PI3K-dependent insulin signaling, although the precise molecular mechanisms and signaling pathways remain unclear. Part of a signaling pathway that regulates actin cytoskeleton remodeling. Required for the maintenance and dynamic remodeling of actin structures as well as in endocytosis, having a major impact on ligand-induced EGFR internalization and degradation. Participates in regulation of cortical and submembraneous actin. Regulates cell adhesion and cell spreading. Acts as a negative regulator of the FC-gamma-RIIA receptor (FCGR2A). Mediates signaling from the FC-gamma-RIIB receptor (FCGR2B), playing a central role in terminating signal transduction from activating immune/hematopoietic cell receptor systems. May also hydrolyze PtdIns(1,3,4,5)P4, and could thus affect the levels of the higher inositol polyphosphates like InsP6. The sequence is that of Phosphatidylinositol 3,4,5-trisphosphate 5-phosphatase 2A (inppl1a) from Danio rerio (Zebrafish).